The sequence spans 425 residues: Ribulose bisphosphate carboxylase/oxygenase activase B, chloroplastic (425 aa).

The transit peptide at 1–43 (MASAFSSTVGAPASTPTIFLGKKVKNYYHGGNKMKSRVVRVMA) directs the protein to the chloroplast. 153–160 (GGKGQGKS) contacts ATP.

Belongs to the RuBisCO activase family.

The protein resides in the plastid. The protein localises to the chloroplast stroma. Its function is as follows. Activation of RuBisCO (ribulose-1,5-bisphosphate carboxylase/oxygenase; EC 4.1.1.39) involves the ATP-dependent carboxylation of the epsilon-amino group of lysine leading to a carbamate structure. The chain is Ribulose bisphosphate carboxylase/oxygenase activase B, chloroplastic (RCAB) from Hordeum vulgare (Barley).